The primary structure comprises 216 residues: Somatotropin (216 aa).

A signal peptide spans 1–26; it reads MAADSQTSRLLTFTLLCLLWPQEAGA. Residue H45 coordinates Zn(2+). The cysteines at positions 78 and 189 are disulfide-linked. Phosphoserine is present on S131. Residue E198 participates in Zn(2+) binding. C206 and C214 are oxidised to a cystine.

It belongs to the somatotropin/prolactin family.

The protein resides in the secreted. In terms of biological role, plays an important role in growth control. Its major role in stimulating body growth is to stimulate the liver and other tissues to secrete IGF1. It stimulates both the differentiation and proliferation of myoblasts. It also stimulates amino acid uptake and protein synthesis in muscle and other tissues. This is Somatotropin (GH1) from Mesocricetus auratus (Golden hamster).